Reading from the N-terminus, the 458-residue chain is Acetyl-CoA decarbonylase/synthase complex subunit gamma (458 aa).

The 59-residue stretch at 1–59 (MQVTAMDVYRLLPKTNCGKCNEASCMAFATKLIEKEVTLDDCPQLSGDERQKLENLLAP) folds into the 4Fe-4S domain. The [4Fe-4S] cluster site is built by C17, C20, C25, and C42.

In terms of assembly, heterodimer of delta and gamma chains. The ACDS complex is made up of alpha, epsilon, beta, gamma and delta chains with a probable stoichiometry of (alpha(2)epsilon(2))(4)-beta(8)-(gamma(1)delta(1))(8). Corrinoid serves as cofactor. Requires [4Fe-4S] cluster as cofactor.

The catalysed reaction is 5,6,7,8-tetrahydrosarcinapterin + methyl-Co(III)-[corrinoid Fe-S protein] = 5-methyltetrahydrosarcinapterin + Co(I)-[corrinoid Fe-S protein] + H(+). In terms of biological role, part of a complex that catalyzes the reversible cleavage of acetyl-CoA, allowing autotrophic growth from CO(2). This is Acetyl-CoA decarbonylase/synthase complex subunit gamma from Methanothermobacter thermautotrophicus (strain ATCC 29096 / DSM 1053 / JCM 10044 / NBRC 100330 / Delta H) (Methanobacterium thermoautotrophicum).